Consider the following 474-residue polypeptide: Cell division protein FtsP (474 aa).

The segment at residues 1 to 27 is a signal peptide (tat-type signal); it reads MSLSRRQFIQAAGLALGAGSLPLRAQA. The 60-residue stretch at 229–288 folds into the Plastocyanin-like domain; the sequence is WVRLRLLNASNARRYTLQLSDGRPLYVVASDQGFLPAPVAVQQLSLAPGERREVVIDMSQ.

It belongs to the FtsP family. In terms of processing, predicted to be exported by the Tat system. The position of the signal peptide cleavage has not been experimentally proven.

It localises to the periplasm. Its function is as follows. Cell division protein that is required for growth during stress conditions. May be involved in protecting or stabilizing the divisomal assembly under conditions of stress. This is Cell division protein FtsP from Yersinia pestis.